We begin with the raw amino-acid sequence, 285 residues long: Golgi phosphoprotein 3-like (285 aa).

The tract at residues 1–39 is disordered; the sequence is MTTLTHRARRTEVGKNSEKKVESEENVNQDRNQDNEDIG. Residues 10-23 show a composition bias toward basic and acidic residues; sequence RTEVGKNSEKKVES. Residues W67 and R76 each coordinate a 1,2-diacyl-sn-glycero-3-phospho-(1D-myo-inositol 4-phosphate). A Phosphoserine modification is found at S112. 2 residues coordinate a 1,2-diacyl-sn-glycero-3-phospho-(1D-myo-inositol 4-phosphate): R157 and R160. Positions 176-187 are beta-hairpin required for oligomerization; sequence EKQNFLLFDMTT.

The protein belongs to the GOLPH3/VPS74 family. As to quaternary structure, homooligomer. Does not interact MYO18; differs from GOLPH3 by its inability to interact with MYO18. May interact with ARF1.

Its subcellular location is the golgi apparatus. The protein resides in the golgi stack membrane. It localises to the trans-Golgi network membrane. Phosphatidylinositol-4-phosphate-binding protein that may antagonize the action of GOLPH3 which is required for the process of vesicle budding at the Golgi and anterograde transport to the plasma membrane. The sequence is that of Golgi phosphoprotein 3-like (GOLPH3L) from Bos taurus (Bovine).